A 78-amino-acid chain; its full sequence is MPKRILQGVVVSDKNEKTVVVRVERRFAHPLLQKTVRRSKKYKAHDESNQYKIGDVVSIEECAPISKDKCWTVVSAQA.

It belongs to the universal ribosomal protein uS17 family. In terms of assembly, part of the 30S ribosomal subunit.

One of the primary rRNA binding proteins, it binds specifically to the 5'-end of 16S ribosomal RNA. This is Small ribosomal subunit protein uS17 from Allorhizobium ampelinum (strain ATCC BAA-846 / DSM 112012 / S4) (Agrobacterium vitis (strain S4)).